Here is a 399-residue protein sequence, read N- to C-terminus: MILNLRVDHKIANIDAMENIAKEMDQLFLELQEKYSIVEYVEISTCNRKEYYIHNDNIDASDSLLSHENKSIIIDYGDSVIKHLFRMTSGLESMIVGEDQILGQVSDAKQKAFKERHCGKILDSIFTKAIHVGRVVRNKTNINKGSISIGSAAVDLAEKHLGNLENKSVLVIGAGKMGKLVAKALAEKNLNAIFVANRTYYVAVELANDLNGHAVLFNELGKYVQTADLIISATGAPHYILNKERLEKTDGDFKDLLMIDIANPRDICEDVCELGVKLFNIDDLREIADENTKLRKKEFAEAENIIDEEFSLLKESFKLIGVEDIIANLRVSMENIRERETEKAIAKLSDVDANAKIIDNLTNSIVNKIFFDISKKIKQAAHENDEELIRAIEFMFEEK.

Residues 45-48 (TCNR), serine 93, 98-100 (EDQ), and glutamine 104 contribute to the substrate site. Cysteine 46 serves as the catalytic Nucleophile. 173 to 178 (GAGKMG) contacts NADP(+).

This sequence belongs to the glutamyl-tRNA reductase family. In terms of assembly, homodimer.

The catalysed reaction is (S)-4-amino-5-oxopentanoate + tRNA(Glu) + NADP(+) = L-glutamyl-tRNA(Glu) + NADPH + H(+). It participates in porphyrin-containing compound metabolism; protoporphyrin-IX biosynthesis; 5-aminolevulinate from L-glutamyl-tRNA(Glu): step 1/2. Functionally, catalyzes the NADPH-dependent reduction of glutamyl-tRNA(Glu) to glutamate 1-semialdehyde (GSA). This chain is Glutamyl-tRNA reductase, found in Methanobrevibacter smithii (strain ATCC 35061 / DSM 861 / OCM 144 / PS).